The sequence spans 182 residues: Ribulose bisphosphate carboxylase small subunit, chloroplastic (182 aa).

A chloroplast-targeting transit peptide spans 1–58; that stretch reads MASSMISSATVATVSRATPAQATMVAPFTGLKSTAAFPATRKSNNDITSLASNGGRVQ.

Belongs to the RuBisCO small chain family. As to quaternary structure, heterohexadecamer of 8 large and 8 small subunits.

The protein resides in the plastid. Its subcellular location is the chloroplast. In terms of biological role, ruBisCO catalyzes two reactions: the carboxylation of D-ribulose 1,5-bisphosphate, the primary event in carbon dioxide fixation, as well as the oxidative fragmentation of the pentose substrate. Both reactions occur simultaneously and in competition at the same active site. Although the small subunit is not catalytic it is essential for maximal activity. The protein is Ribulose bisphosphate carboxylase small subunit, chloroplastic of Fagus crenata (Japanese beech).